The following is a 224-amino-acid chain: Large ribosomal subunit protein uL3 (224 aa).

Gln-158 carries the post-translational modification N5-methylglutamine.

It belongs to the universal ribosomal protein uL3 family. In terms of assembly, part of the 50S ribosomal subunit. Forms a cluster with proteins L14 and L19. Methylated by PrmB.

Its function is as follows. One of the primary rRNA binding proteins, it binds directly near the 3'-end of the 23S rRNA, where it nucleates assembly of the 50S subunit. This chain is Large ribosomal subunit protein uL3, found in Acidovorax sp. (strain JS42).